A 268-amino-acid polypeptide reads, in one-letter code: Fc receptor-like protein 6 (268 aa).

A signal peptide spans 1–16 (MLLWMVLLLCESMAEA). Residues 17 to 215 (QELFPNPELT…TAWIKSNMLP (199 aa)) lie on the Extracellular side of the membrane. Residues 114 to 194 (PVLTLQHEAT…AKNNISREIS (81 aa)) enclose the Ig-like C2-type domain. Residues Cys135 and Cys183 are joined by a disulfide bond. Residues Asn180 and Asn188 are each glycosylated (N-linked (GlcNAc...) asparagine). Residues 216-236 (IWLPASLLGGMVIAAVVLMYF) form a helical membrane-spanning segment. The Cytoplasmic portion of the chain corresponds to 237 to 268 (FKPCKKHARPETPTLKEPDSFLYVSVDNQRYK).

As to quaternary structure, interacts with class II MHC.

The protein localises to the cell membrane. In terms of biological role, acts as a MHC class II receptor. When stimulated on its own, does not play a role in cytokine production or the release of cytotoxic granules by NK cells and cytotoxic CD8(+) T cells. Does not act as an Fc receptor. This Mus musculus (Mouse) protein is Fc receptor-like protein 6 (Fcrl6).